Consider the following 227-residue polypeptide: Cytidylate kinase (227 aa).

G12–T20 serves as a coordination point for ATP.

This sequence belongs to the cytidylate kinase family. Type 1 subfamily.

The protein resides in the cytoplasm. The enzyme catalyses CMP + ATP = CDP + ADP. The catalysed reaction is dCMP + ATP = dCDP + ADP. This Shigella sonnei (strain Ss046) protein is Cytidylate kinase.